The primary structure comprises 258 residues: UPF0246 protein YaaA (258 aa).

The protein belongs to the UPF0246 family.

This chain is UPF0246 protein YaaA, found in Escherichia coli O6:K15:H31 (strain 536 / UPEC).